We begin with the raw amino-acid sequence, 341 residues long: Outer membrane protein U (341 aa).

A signal peptide spans Met-1–Ala-21.

The protein belongs to the Gram-negative porin family. As to quaternary structure, homotrimer.

The protein resides in the cell outer membrane. Functionally, forms pores that allow passive diffusion of small molecules across the outer membrane. In Vibrio cholerae serotype O1 (strain ATCC 39315 / El Tor Inaba N16961), this protein is Outer membrane protein U (ompU).